We begin with the raw amino-acid sequence, 970 residues long: Polycystin-2 (970 aa).

Positions 1-11 are enriched in polar residues; that stretch reads MVNSSRVQPQQ. The segment at 1 to 182 is disordered; that stretch reads MVNSSRVQPQ…GDPLHRHLPL (182 aa). The Cytoplasmic portion of the chain corresponds to 1-221; the sequence is MVNSSRVQPQ…STDREKYLKS (221 aa). Over residues 25–45 the composition is skewed to low complexity; sequence GPGRLMAGGAIAGAGLAAPGG. The span at 47–60 shows a compositional bias: basic and acidic residues; sequence REQRGLEIEMERIR. Residues 62 to 83 show a composition bias toward low complexity; it reads AAARDPPAGASASPSPPLSSCS. Phosphoserine is present on residues serine 76 and serine 80. Acidic residues predominate over residues 95 to 109; that stretch reads EAEEEEEEEEVEGEE. Residues 125-138 are compositionally biased toward low complexity; that stretch reads RRSASSSAVSSAGA. Arginine 139 carries the post-translational modification Omega-N-methylarginine. Positions 139–148 are enriched in gly residues; that stretch reads RGRGLGGYHG. A helical membrane pass occupies residues 222–243; the sequence is VLRELATYLLFLIVLCILTYGM. Topologically, residues 244–470 are extracellular; sequence MSSSVYYYTR…PVKLIRYVTT (227 aa). Residues asparagine 301, asparagine 307, and asparagine 330 are each glycosylated (N-linked (GlcNAc...) asparagine). The cysteines at positions 333 and 346 are disulfide-linked. 2 N-linked (GlcNAc...) asparagine glycosylation sites follow: asparagine 364 and asparagine 377. Residues 471-491 traverse the membrane as a helical segment; that stretch reads FDFFLAACEIIFCLFILYYVV. The Cytoplasmic segment spans residues 492 to 507; the sequence is EEILEIRIHKLHYFRS. The chain crosses the membrane as a helical span at residues 508–528; the sequence is FWNCLDVVIIVLSVVAIGINI. The Extracellular portion of the chain corresponds to 529 to 554; the sequence is YRTSNVEALLQFLEDQNTFPNFENLA. A helical membrane pass occupies residues 555–575; sequence YWQTQFNNIAAVIVFFVWIKL. Cholesterol is bound at residue glutamine 559. Over 576–599 the chain is Cytoplasmic; the sequence is FKFINFNRTMSQLSTTMSRCAKDL. Residues 600 to 621 traverse the membrane as a helical segment; it reads FGFAIMFFIIFLAYAQLAYLVF. Topologically, residues 622–633 are extracellular; it reads GTQVDDFSTFQE. Residues 634 to 648 constitute an intramembrane region (pore-forming); the sequence is CIFTQFRIILGDINF. Leucine 643 contacts Ca(2+). The Selectivity filter signature appears at 643 to 645; it reads LGD. At 649–656 the chain is on the extracellular side; it reads AEIEEANR. A helical transmembrane segment spans residues 657–677; the sequence is VLGPIYFTTFVFFMFFILLNM. Over 678–970 the chain is Cytoplasmic; the sequence is FLAIINDTYS…GGNGSANIHV (293 aa). In terms of domain architecture, EF-hand spans 750–785; it reads KGHTDAEIEAIFTKYDQDGDQELTEHEHQQMRDDLE. Residues aspartate 765, aspartate 767, aspartate 769, glutamate 771, and glutamate 776 each coordinate Ca(2+). The tract at residues 766–833 is disordered; that stretch reads QDGDQELTEH…HSSRRRGSIS (68 aa). Positions 772–797 are enriched in basic and acidic residues; it reads LTEHEHQQMRDDLEKEREDLDLDHSS. Residues 798–809 are compositionally biased toward low complexity; that stretch reads LPRPMSSRSFPR. Phosphoserine is present on residues serine 803, serine 810, serine 814, and serine 831. The linker stretch occupies residues 805–824; the sequence is RSFPRSLDDSEEEDDDDSGH. The interval 812–823 is important for interaction with PACS1 and PACS2; that stretch reads DDSEEEDDDDSG. Positions 835 to 874 form a coiled coil; the sequence is GVSYEEFQVLVRRVDRMEHSIGSIVSKIDAVIVKLEIMER. The interval 921–970 is disordered; that stretch reads DDAASQISHGLGTPLGLNGQPRPRSSRPSSSQSTEGMEGGGGNGSANIHV. The span at 940–956 shows a compositional bias: low complexity; the sequence is QPRPRSSRPSSSQSTEG.

This sequence belongs to the polycystin family. As to quaternary structure, homotetramer. Component of the heterotetrameric polycystin channel complex with PKD1; the tetramer contains one PKD1 chain and three PKD2 chains. Isoform 1 interacts with PKD1 while isoform 3 does not. Interacts with PKD1L1; probably forms a Ca(2+) channel. Interacts with CD2AP. Interacts with HAX1. Interacts with NEK8. Part of a complex containing AKAP5, ADCY5, ADCY6 and PDE4C. Interacts (via C-terminus) with TRPV4 (via C-terminus). Interacts (via C-terminal acidic region) with PACS1 and PACS2; these interactions retain the protein in the endoplasmic reticulum and prevent trafficking to the cell membrane. Interacts with TMEM33. Form a heterotetramer with TRPC1 with a 2:2 stoichiometry; has distinct channel properties separate from PKD2 or TRPC1 homomers alone. Interacts with TMEM120A; TMEM120A inhibits PKD2 channel activity through the physical association of PKD2 with TMEM120A. Interacts (via N-terminus) with RYR2; regulates RYR2 channel activity. Post-translationally, N-glycosylated. The four subunits in a tetramer probably differ in the extent of glycosylation; simultaneous glycosylation of all experimentally validated sites would probably create steric hindrance. In terms of processing, phosphorylated. Phosphorylation is important for protein function; a mutant that lacks the N-terminal phosphorylation sites cannot complement a zebrafish pkd2-deficient mutant. PKD-mediated phosphorylation at the C-terminus regulates its function in the release of Ca(2+) stores from the endoplasmic reticulum. Phosphorylation at Ser-814 regulates PKD2 trafficking. Phosphorylation at Ser-76 is required for PKD2 trafficking to or retention at the lateral plasma membrane. Phosphorylation at Ser-803, Ser-814 and Ser-831 regulates PKD2 channel activity. Sumoylated by SUMO1; sumoylation regulates PKD2 membrane recycling and is necessary for intravascular pressure-induced arterial contractility. Expressed in mesenchymally derived structures in the developing embryo at day 12.5. In adult, mostly expressed in kidney.

Its subcellular location is the cell projection. The protein localises to the cilium membrane. The protein resides in the endoplasmic reticulum membrane. It localises to the cell membrane. It is found in the basolateral cell membrane. Its subcellular location is the cytoplasmic vesicle membrane. The protein localises to the golgi apparatus. The protein resides in the vesicle. It localises to the secreted. It is found in the extracellular exosome. It carries out the reaction K(+)(in) = K(+)(out). The catalysed reaction is Na(+)(in) = Na(+)(out). It catalyses the reaction Ca(2+)(in) = Ca(2+)(out). Its activity is regulated as follows. Channel activity is regulated by phosphorylation. Channel activity is regulated by intracellular Ca(2+). At the endoplasmic reticulum membrane (ER), TMEM33 enhances its channel activity. TMEM120A inhibits the channel activity of PKD2, and mediates mechanosensitivity of the PKD2-TMEM120A channel complex. PKD1/PKD2 complex on the plasma membrane is activated by PKD1 N-terminus. Forms a nonselective cation channel. Can function as a homotetrameric ion channel or can form heteromer with PKD1. Displays distinct function depending on its subcellular localization and regulation by its binding partners. Functions as a cation channel, with a preference for monovalent cations over divalent cations that allows K(+), Na(+) and Ca(2+) influx, with low selectivity for Ca(2+). Involved in fluid-flow mechanosensation in the primary cilium in renal epithelium. In the endoplasmic reticulum, likely functions as a K(+) channel to facilitate Ca(2+) release. The heterotetrameric PKD1/PKD2 channel has higher Ca(2+) permeability than homomeric PKD2 channel and acts as a primarily Ca(2+)-permeable channel. Interacts with and acts as a regulator of a number of other channels, such as TRPV4, TRPC1, IP3R, RYR2, ultimately further affecting intracellular signaling, to modulate intracellular Ca(2+) signaling. Together with TRPV4, forms mechano- and thermosensitive channels in cilium. In cardiomyocytes, PKD2 modulates Ca(2+) release from stimulated RYR2 receptors through direct association. Also involved in left-right axis specification via its role in sensing nodal flow; forms a complex with PKD1L1 in cilia to facilitate flow detection in left-right patterning. Acts as a regulator of cilium length together with PKD1. Mediates systemic blood pressure and contributes to the myogenic response in cerebral arteries though vasoconstriction. The protein is Polycystin-2 of Bos taurus (Bovine).